A 132-amino-acid chain; its full sequence is Small ribosomal subunit protein uS8 (132 aa).

Belongs to the universal ribosomal protein uS8 family. As to quaternary structure, part of the 30S ribosomal subunit. Contacts proteins S5 and S12.

Functionally, one of the primary rRNA binding proteins, it binds directly to 16S rRNA central domain where it helps coordinate assembly of the platform of the 30S subunit. In Bacillus velezensis (strain DSM 23117 / BGSC 10A6 / LMG 26770 / FZB42) (Bacillus amyloliquefaciens subsp. plantarum), this protein is Small ribosomal subunit protein uS8.